The primary structure comprises 120 residues: Protein TCL1B4 (120 aa).

This sequence belongs to the TCL1 family.

The polypeptide is Protein TCL1B4 (Tcl1b4) (Mus musculus (Mouse)).